The following is a 360-amino-acid chain: 3-dehydroquinate synthase (360 aa).

Residues 71-76 (DGEQYK), 105-109 (GVIGD), 129-130 (TT), Lys-142, Lys-151, and 169-172 (CLDT) contribute to the NAD(+) site. Residues Glu-184, His-247, and His-264 each coordinate Zn(2+).

Belongs to the sugar phosphate cyclases superfamily. Dehydroquinate synthase family. Requires Co(2+) as cofactor. It depends on Zn(2+) as a cofactor. The cofactor is NAD(+).

The protein localises to the cytoplasm. The enzyme catalyses 7-phospho-2-dehydro-3-deoxy-D-arabino-heptonate = 3-dehydroquinate + phosphate. Its pathway is metabolic intermediate biosynthesis; chorismate biosynthesis; chorismate from D-erythrose 4-phosphate and phosphoenolpyruvate: step 2/7. Catalyzes the conversion of 3-deoxy-D-arabino-heptulosonate 7-phosphate (DAHP) to dehydroquinate (DHQ). This chain is 3-dehydroquinate synthase, found in Erwinia tasmaniensis (strain DSM 17950 / CFBP 7177 / CIP 109463 / NCPPB 4357 / Et1/99).